The chain runs to 354 residues: MIKTDILIIGAGPTGLFTVFEAGLLKLKTHLIDALPQPGGQCSEIYPKKPIYDIPAFPEILAGDLVSNLMEQIRPFKPGFTLGERAETLEKLDDGSFIVTTNKGTQHHAPVVAIAGGLGSFEPRKPPIPNIADFEDKGVSYFIKDPEVYRDKKVVIAGGGDSALDWAIYLADVASEVALVHRRAEFRGALDSVERVSELAKLGRIEMITNAEVVGLRGEDNLEQVVIRHKDKARGEEFRDVDDFIPLFGLSPKLGPIGSWGLEIERNAIKVDNSYDYQTNIPGVYAIGDVNTYKGKLKLILSGFHEAAIMCQSAYQRIYPDKKYVLKYTTVGGVEGFDGTKKEAKKEVVQSIGV.

Residues T14, D33, Q41, Y46, A86, F121, D289, and T330 each coordinate FAD.

The protein belongs to the ferredoxin--NADP reductase type 2 family. In terms of assembly, homodimer. Requires FAD as cofactor.

It carries out the reaction 2 reduced [2Fe-2S]-[ferredoxin] + NADP(+) + H(+) = 2 oxidized [2Fe-2S]-[ferredoxin] + NADPH. The polypeptide is Ferredoxin--NADP reductase 2 (Christiangramia forsetii (strain DSM 17595 / CGMCC 1.15422 / KT0803) (Gramella forsetii)).